A 540-amino-acid chain; its full sequence is Ribonuclease Y (540 aa).

The chain crosses the membrane as a helical span at residues 4–24; the sequence is TILVPVAVAIVSVLVGGCAGY. Residues 230-293 enclose the KH domain; the sequence is TVSVVNLPSD…EIAKRALERL (64 aa). The region spanning 356–449 is the HD domain; it reads VLSHSIEVGK…VVAADTISSA (94 aa).

Belongs to the RNase Y family.

It localises to the cell membrane. Its function is as follows. Endoribonuclease that initiates mRNA decay. This is Ribonuclease Y from Lactobacillus johnsonii (strain CNCM I-12250 / La1 / NCC 533).